The sequence spans 1069 residues: Receptor-type guanylate cyclase gcy-29 (1069 aa).

A signal peptide spans 1–23; it reads MLPNFWNFQFIFVIFCWIPIVVS. Residues 24-458 are Extracellular-facing; that stretch reads DEKIVLKIGS…FREENCDYTQ (435 aa). Asn161, Asn240, and Asn407 each carry an N-linked (GlcNAc...) asparagine glycan. A helical membrane pass occupies residues 459-479; that stretch reads TIVIATAVVCIILTVFLGIWL. Topologically, residues 480-1069 are cytoplasmic; sequence RRACETSALD…FKKKNNTFDF (590 aa). A Protein kinase domain is found at 497 to 806; that stretch reads RDDVQILDEE…RVRLATEIAL (310 aa). ATP contacts are provided by residues 503–511 and Lys527; that span reads LDEEQVKSV. The Guanylate cyclase domain maps to 876–1006; that stretch reads TVMFSDIVGF…ETVNIAAVME (131 aa). Mg(2+)-binding residues include Asp881, Ile882, and Asp925.

The protein belongs to the adenylyl cyclase class-4/guanylyl cyclase family. Expressed bilaterally in ASE and AFD sensory neurons.

The protein localises to the cell membrane. The catalysed reaction is GTP = 3',5'-cyclic GMP + diphosphate. In terms of biological role, guanylate cyclase involved in the production of the second messenger cGMP. The chain is Receptor-type guanylate cyclase gcy-29 from Caenorhabditis elegans.